The primary structure comprises 338 residues: Ketol-acid reductoisomerase (NADP(+)) (338 aa).

The KARI N-terminal Rossmann domain occupies 1-181; sequence MKVFYDKDCD…GGGRTGIIET (181 aa). NADP(+) is bound by residues 24–27, R47, S50, T52, and 82–85; these read YGSQ and DEFQ. H107 is a catalytic residue. Residue G133 coordinates NADP(+). Residues 182–327 enclose the KARI C-terminal knotted domain; that stretch reads TFKDETETDL…EQLRSMMPWI (146 aa). Mg(2+)-binding residues include D190, E194, E226, and E230. Substrate is bound at residue S251.

Belongs to the ketol-acid reductoisomerase family. It depends on Mg(2+) as a cofactor.

The enzyme catalyses (2R)-2,3-dihydroxy-3-methylbutanoate + NADP(+) = (2S)-2-acetolactate + NADPH + H(+). It catalyses the reaction (2R,3R)-2,3-dihydroxy-3-methylpentanoate + NADP(+) = (S)-2-ethyl-2-hydroxy-3-oxobutanoate + NADPH + H(+). The protein operates within amino-acid biosynthesis; L-isoleucine biosynthesis; L-isoleucine from 2-oxobutanoate: step 2/4. It functions in the pathway amino-acid biosynthesis; L-valine biosynthesis; L-valine from pyruvate: step 2/4. In terms of biological role, involved in the biosynthesis of branched-chain amino acids (BCAA). Catalyzes an alkyl-migration followed by a ketol-acid reduction of (S)-2-acetolactate (S2AL) to yield (R)-2,3-dihydroxy-isovalerate. In the isomerase reaction, S2AL is rearranged via a Mg-dependent methyl migration to produce 3-hydroxy-3-methyl-2-ketobutyrate (HMKB). In the reductase reaction, this 2-ketoacid undergoes a metal-dependent reduction by NADPH to yield (R)-2,3-dihydroxy-isovalerate. The polypeptide is Ketol-acid reductoisomerase (NADP(+)) (Pseudomonas entomophila (strain L48)).